The sequence spans 458 residues: tRNA-2-methylthio-N(6)-dimethylallyladenosine synthase (458 aa).

The MTTase N-terminal domain occupies Lys15–Gln134. Residues Cys24, Cys60, Cys97, Cys175, Cys179, and Cys182 each contribute to the [4Fe-4S] cluster site. The Radical SAM core domain occupies Arg161–Ala393. The 62-residue stretch at Arg396–Asn457 folds into the TRAM domain.

This sequence belongs to the methylthiotransferase family. MiaB subfamily. In terms of assembly, monomer. It depends on [4Fe-4S] cluster as a cofactor.

The protein resides in the cytoplasm. It catalyses the reaction N(6)-dimethylallyladenosine(37) in tRNA + (sulfur carrier)-SH + AH2 + 2 S-adenosyl-L-methionine = 2-methylsulfanyl-N(6)-dimethylallyladenosine(37) in tRNA + (sulfur carrier)-H + 5'-deoxyadenosine + L-methionine + A + S-adenosyl-L-homocysteine + 2 H(+). Catalyzes the methylthiolation of N6-(dimethylallyl)adenosine (i(6)A), leading to the formation of 2-methylthio-N6-(dimethylallyl)adenosine (ms(2)i(6)A) at position 37 in tRNAs that read codons beginning with uridine. This is tRNA-2-methylthio-N(6)-dimethylallyladenosine synthase from Bartonella henselae (strain ATCC 49882 / DSM 28221 / CCUG 30454 / Houston 1) (Rochalimaea henselae).